We begin with the raw amino-acid sequence, 500 residues long: NAD(P)H-quinone oxidoreductase chain 4, chloroplastic (500 aa).

Helical transmembrane passes span 4-24, 37-57, 87-107, 111-131, 134-154, 167-187, 208-228, 242-262, 272-292, 305-325, 330-350, 386-406, 416-436, and 462-482; these read FPWLTIIVVFPILTGSLIFLL, LCICILELLLTTYTFCYHFQL, IGPILLTGFITTLATLAAWPV, AQLFHFLMLAMYSGQIGSFSS, LLLFFLMWEFELIPVYLLLSM, FILYTAGGSIFLLIGVLGIGL, ALEVIFYVGFLIAFAVKLPII, HYSTCMLLAGILLKMGAYGLV, AHCLFSPGLIIVGAIQIIYAA, IAYSSISHMGFIIIGIGSLSD, GAILQIISHGFIGAALFFLAG, LALPGLSGFVAELLVFFGIIT, ILIAFLMAIGMILTPIYSLSM, and LFVSISLLLPIIGIGIYPDFV.

Belongs to the complex I subunit 4 family.

Its subcellular location is the plastid. It is found in the chloroplast thylakoid membrane. The enzyme catalyses a plastoquinone + NADH + (n+1) H(+)(in) = a plastoquinol + NAD(+) + n H(+)(out). The catalysed reaction is a plastoquinone + NADPH + (n+1) H(+)(in) = a plastoquinol + NADP(+) + n H(+)(out). The sequence is that of NAD(P)H-quinone oxidoreductase chain 4, chloroplastic from Oenothera biennis (German evening primrose).